Consider the following 483-residue polypeptide: Cobyric acid synthase (483 aa).

The GATase cobBQ-type domain maps to 251–438 (ALIVAVPMLP…LHGIFSADRF (188 aa)). C333 acts as the Nucleophile in catalysis. The active site involves H430.

This sequence belongs to the CobB/CobQ family. CobQ subfamily.

The protein operates within cofactor biosynthesis; adenosylcobalamin biosynthesis. In terms of biological role, catalyzes amidations at positions B, D, E, and G on adenosylcobyrinic A,C-diamide. NH(2) groups are provided by glutamine, and one molecule of ATP is hydrogenolyzed for each amidation. In Brucella abortus (strain S19), this protein is Cobyric acid synthase.